The chain runs to 113 residues: Eukaryotic translation initiation factor 1b (113 aa).

Residue Ser2 is modified to N-acetylserine. The residue at position 9 (Ser9) is a Phosphoserine.

This sequence belongs to the SUI1 family.

Its function is as follows. Probably involved in translation. This is Eukaryotic translation initiation factor 1b (EIF1B) from Homo sapiens (Human).